The following is an 82-amino-acid chain: Omega-conotoxin-like 9 (82 aa).

A signal peptide spans 1–22; sequence MKLTCMMIAAVLFLTTWTFVTA. The propeptide occupies 23–51; that stretch reads DDSRYGLKNLFPKARHEMKNPEASKLNKR. 3 disulfides stabilise this stretch: C54/C69, C61/C73, and C68/C77.

This sequence belongs to the conotoxin O1 superfamily. Expressed by the venom duct.

The protein localises to the secreted. In terms of biological role, omega-conotoxins act at presynaptic membranes, they bind and block voltage-gated calcium channels (Cav). The sequence is that of Omega-conotoxin-like 9 from Conus striatus (Striated cone).